The chain runs to 468 residues: Citrate synthase, mitochondrial (468 aa).

A mitochondrion-targeting transit peptide spans M1 to S30. Catalysis depends on residues H303 and H349. R358 contributes to the oxaloacetate binding site. Residue D404 is part of the active site. R430 and R450 together coordinate oxaloacetate.

Belongs to the citrate synthase family. In terms of assembly, homodimer.

It is found in the mitochondrion matrix. It carries out the reaction oxaloacetate + acetyl-CoA + H2O = citrate + CoA + H(+). It functions in the pathway carbohydrate metabolism; tricarboxylic acid cycle; isocitrate from oxaloacetate: step 1/2. Its function is as follows. Key enzyme of the Krebs tricarboxylic acid cycle which catalyzes the synthesis of citrate from acetyl coenzyme A and oxaloacetate. The chain is Citrate synthase, mitochondrial (cs) from Xenopus laevis (African clawed frog).